Reading from the N-terminus, the 387-residue chain is Protein RecA (387 aa).

80 to 87 (GPESSGKT) lines the ATP pocket. The disordered stretch occupies residues 348 to 387 (LDDSEVAETEEETTASKTKAKAKKEEKAVETEEIELELED). 2 stretches are compositionally biased toward acidic residues: residues 349-360 (DDSEVAETEEET) and 378-387 (TEEIELELED).

This sequence belongs to the RecA family.

Its subcellular location is the cytoplasm. Its function is as follows. Can catalyze the hydrolysis of ATP in the presence of single-stranded DNA, the ATP-dependent uptake of single-stranded DNA by duplex DNA, and the ATP-dependent hybridization of homologous single-stranded DNAs. It interacts with LexA causing its activation and leading to its autocatalytic cleavage. The sequence is that of Protein RecA from Lactococcus lactis subsp. cremoris (strain MG1363).